Reading from the N-terminus, the 89-residue chain is UPF0297 protein SUB1776 (89 aa).

This sequence belongs to the UPF0297 family.

The chain is UPF0297 protein SUB1776 from Streptococcus uberis (strain ATCC BAA-854 / 0140J).